The chain runs to 305 residues: Achromobactin-binding periplasmic protein (305 aa).

The first 29 residues, 1–29 (MNEYLVSRRRLLRLSLSLLPLGLGRPALA), serve as a signal peptide directing secretion. In terms of domain architecture, Fe/B12 periplasmic-binding spans 37-302 (RVITLFQGAT…DIARVTGIAG (266 aa)).

The protein belongs to the bacterial solute-binding protein 8 family.

Its subcellular location is the periplasm. Its function is as follows. Binds citrate- or chloride-dependent Fe(3+); part of the binding-protein-dependent transport system CbrABCD for uptake of the siderophore achromobactin. The chain is Achromobactin-binding periplasmic protein (cbrA) from Dickeya dadantii (strain 3937) (Erwinia chrysanthemi (strain 3937)).